Here is a 129-residue protein sequence, read N- to C-terminus: Glycine cleavage system H protein (129 aa).

Residues 22–103 (TGTVGITDYA…AHTAWIMKIE (82 aa)) enclose the Lipoyl-binding domain. Position 63 is an N6-lipoyllysine (Lys-63).

This sequence belongs to the GcvH family. As to quaternary structure, the glycine cleavage system is composed of four proteins: P, T, L and H. Requires (R)-lipoate as cofactor.

Functionally, the glycine cleavage system catalyzes the degradation of glycine. The H protein shuttles the methylamine group of glycine from the P protein to the T protein. This is Glycine cleavage system H protein from Acidobacterium capsulatum (strain ATCC 51196 / DSM 11244 / BCRC 80197 / JCM 7670 / NBRC 15755 / NCIMB 13165 / 161).